The following is a 506-amino-acid chain: Arylsulfatase A (506 aa).

The first 17 residues, 1-17, serve as a signal peptide directing secretion; the sequence is MALGTLFLALAAGLSTA. Positions 28, 29, and 68 each coordinate Ca(2+). Residue Cys68 is the Nucleophile of the active site. Cys68 carries the post-translational modification 3-oxoalanine (Cys). Lys122 contributes to the substrate binding site. His124 is an active-site residue. Position 149 (Ser149) interacts with substrate. 2 disulfides stabilise this stretch: Cys155/Cys171 and Cys160/Cys167. The N-linked (GlcNAc...) asparagine glycan is linked to Asn157. Asn183 carries an N-linked (GlcNAc...) asparagine glycan. His228 provides a ligand contact to substrate. Ca(2+)-binding residues include Asp280 and Asn281. 4 disulfide bridges follow: Cys299–Cys413, Cys487–Cys499, Cys488–Cys501, and Cys492–Cys498. Lys301 provides a ligand contact to substrate. N-linked (GlcNAc...) asparagine glycosylation is present at Asn349.

It belongs to the sulfatase family. Homodimer at neutral pH and homooctamer at acidic pH. Exists both as a single chain of 58 kDa (component A) or as a chain of 50 kDa (component B) linked by disulfide bond(s) to a 7 kDa chain (component C). Interacts with SUMF1. Ca(2+) is required as a cofactor. The conversion to 3-oxoalanine (also known as C-formylglycine, FGly), of a serine or cysteine residue in prokaryotes and of a cysteine residue in eukaryotes, is critical for catalytic activity. This post-translational modification is severely defective in multiple sulfatase deficiency (MSD).

The protein localises to the endoplasmic reticulum. It is found in the lysosome. It catalyses the reaction an N-acyl-1-beta-D-(3-O-sulfo)-galactosyl-sphing-4-enine + H2O = a beta-D-galactosyl-(1&lt;-&gt;1')-N-acylsphing-4-enine + sulfate + H(+). In terms of biological role, hydrolyzes cerebroside sulfate. In Mus musculus (Mouse), this protein is Arylsulfatase A (Arsa).